Here is a 144-residue protein sequence, read N- to C-terminus: FK506-binding protein 2 (144 aa).

The first 20 residues, 1–20, serve as a signal peptide directing secretion; that stretch reads MARIIVLIVAFMALIAGVFA. Residues 48–136 form the PPIase FKBP-type domain; it reads GDTVSVHYTG…IFTTELVSID (89 aa). The Prevents secretion from ER motif lies at 141 to 144; the sequence is RDEL.

This sequence belongs to the FKBP-type PPIase family. FKBP2 subfamily.

The protein resides in the endoplasmic reticulum. The enzyme catalyses [protein]-peptidylproline (omega=180) = [protein]-peptidylproline (omega=0). With respect to regulation, inhibited by both FK506 and rapamycin. Its function is as follows. PPIases accelerate the folding of proteins. It catalyzes the cis-trans isomerization of proline imidic peptide bonds in oligopeptides. The chain is FK506-binding protein 2 (FPR2) from Yarrowia lipolytica (strain CLIB 122 / E 150) (Yeast).